The following is a 372-amino-acid chain: MTSLETYNDNVKTALIMCFLSGLSTAIGGLYVIFIKQQSHKLLGHLLSFSSGVMIYISFMDLLPESIAEIGFYNANIWFFVGIIFFAVILRFVPHDHDESGDSNHAHSHNGASIEKHSSEKKEVVDDDDDDNNGKDKKQKQQKQKQQKQQQQQKQNIAKSKNKKKSKDDYLNSVGIATAIGVSLHNFPEGVAVYLACLKGIDVGLPLMLAIAAHNIPEGMAVAAPIFSATGSKWKAFKYCLYSGLCEPVGAIIFGLIFKEYMTPYLIQSMLAAVAGIMVFMVIKELLPAAFKYVSVDESAFSNIIGMIFFFFSIHFLHSMLPHDHGGAGDGGHGHSHGGHGHSHGHGHSHGGHSHDSQHVESPQSSSFNAFA.

The next 3 membrane-spanning stretches (helical) occupy residues 15-35 (LIMC…VIFI), 42-62 (LLGH…FMDL), and 70-90 (IGFY…AVIL). The tract at residues 99-166 (ESGDSNHAHS…IAKSKNKKKS (68 aa)) is disordered. Basic and acidic residues predominate over residues 114–124 (IEKHSSEKKEV). Residues 133 to 167 (NGKDKKQKQQKQKQQKQQQQQKQNIAKSKNKKKSK) adopt a coiled-coil conformation. The segment covering 137–146 (KKQKQQKQKQ) has biased composition (basic residues). Positions 147 to 159 (QKQQQQQKQNIAK) are enriched in low complexity. A run of 5 helical transmembrane segments spans residues 170–192 (YLNS…EGVA), 207–229 (LMLA…IFSA), 237–257 (FKYC…FGLI), 271–291 (LAAV…PAAF), and 301–321 (FSNI…HSML). Positions 328–372 (AGDGGHGHSHGGHGHSHGHGHSHGGHSHDSQHVESPQSSSFNAFA) are disordered. The segment covering 334–352 (GHSHGGHGHSHGHGHSHGG) has biased composition (basic residues). The span at 360–372 (VESPQSSSFNAFA) shows a compositional bias: polar residues.

The protein belongs to the ZIP transporter (TC 2.A.5) family. ZupT subfamily.

It localises to the membrane. Its function is as follows. May transport divalent cations. May participate, with dstA, in the regulation of the differentiation of stalk cells during development. This Dictyostelium discoideum (Social amoeba) protein is Protein zntB (zntB).